We begin with the raw amino-acid sequence, 783 residues long: MGFSQAIRLNLASFSSPSPCDYCLTRVVNHKQKSLVAFPSITRRKRHLLLSVQSVLHNTRPNINDNGSAESANVLFDKLFARTHRLERQTNQHSVYPDDDDLPYSNLGVLESDLEAALVALLKREEDLHDAERKLLSDKNKLNRAKEELEKREKTISEASLKHESLQEELKRANVELASQAREIEELKHKLRERDEERAALQSSLTLKEEELEKMRQEIANRSKEVSMAISEFESKSQLLSKANEVVKRQEGEIYALQRALEEKEEELEISKATKKLEQEKLRETEANLKKQTEEWLIAQDEVNKLKEETVKRLGEANETMEDFMKVKKLLTDVRFELISSREALVFSREQMEEKELLLEKQLEELEEQRKSVLSYMQSLRDAHTEVESERVKLRVVEAKNFALEREISVQKELLEDLREELQKEKPLLELAMHDISVIQDELYKKANAFQVSQNLLQEKESSLVEAKLEIQHLKSEQASLELLLQEKDEELAEARNKLGEVNQEVTELKALMISREDQLMEATEMLKEKDVHLHRIEGELGSSKLKVTEAEMVVERIAELTNRLLMSTTNGQNQNAMRINNEISIDSMQQPLEKPHDDYGMENKRLVMELSFTRENLRMKEMEVLAVQRALTFKDEEINVVMGRLEAKEQELKKLKEETINDSEDLKVLYALAQERVGEKTMGDLAIEMLQLEAANLEVEAATSALQKLAKMSTELLTQADMSIEADTTHTVMPERGYSEGSNECLGEVKTEVVRLWSLTEKLLENAGIVAGTSTCMEGVIL.

Residues 1–27 constitute a chloroplast transit peptide; it reads MGFSQAIRLNLASFSSPSPCDYCLTRV. Coiled-coil stretches lie at residues 128–309, 345–432, and 457–512; these read LHDA…LKEE, LVFS…LELA, and LQEK…LKAL.

As to quaternary structure, interacts with PTST2; the interaction is essential for the initiation of starch granules biosynthesis in leaf chloroplasts. Interacts with SS4; the interaction is essential for the initiation of starch granules biosynthesis in leaf chloroplasts.

Its subcellular location is the plastid. It is found in the chloroplast. Its function is as follows. Required for the initiation of starch granules biosynthesis in leaf chloroplasts. Involved in determining starch granule number and size in chloroplasts. In Arabidopsis thaliana (Mouse-ear cress), this protein is Protein involved in starch initiation 1.